The following is a 118-amino-acid chain: Beta-2-microglobulin (118 aa).

Positions 1–20 (MARVVALVLLGLLSLTGLEA) are cleaved as a signal peptide. An Ig-like C1-type domain is found at 25-111 (PKVQVYSRHP…QHSTLKEPLI (87 aa)). Cys45 and Cys99 are joined by a disulfide.

This sequence belongs to the beta-2-microglobulin family. As to quaternary structure, heterodimer of an alpha chain and a beta chain. Beta-2-microglobulin is the beta-chain of major histocompatibility complex class I molecules.

Its subcellular location is the secreted. Functionally, component of the class I major histocompatibility complex (MHC). Involved in the presentation of peptide antigens to the immune system. The chain is Beta-2-microglobulin (B2M) from Equus asinus (Donkey).